A 518-amino-acid polypeptide reads, in one-letter code: Putative cysteine ligase BshC (518 aa).

The stretch at 404–474 (AAASAERLAA…RARQLTRLKR (71 aa)) forms a coiled coil.

Belongs to the BshC family.

The polypeptide is Putative cysteine ligase BshC (Deinococcus geothermalis (strain DSM 11300 / CIP 105573 / AG-3a)).